The chain runs to 300 residues: Aspartate carbamoyltransferase catalytic subunit (300 aa).

Arg50 and Thr51 together coordinate carbamoyl phosphate. Lys78 provides a ligand contact to L-aspartate. Positions 100, 127, and 130 each coordinate carbamoyl phosphate. Residues Arg160 and Arg210 each contribute to the L-aspartate site. Carbamoyl phosphate is bound by residues Ala253 and Pro254.

The protein belongs to the aspartate/ornithine carbamoyltransferase superfamily. ATCase family. As to quaternary structure, heterododecamer (2C3:3R2) of six catalytic PyrB chains organized as two trimers (C3), and six regulatory PyrI chains organized as three dimers (R2).

The enzyme catalyses carbamoyl phosphate + L-aspartate = N-carbamoyl-L-aspartate + phosphate + H(+). It participates in pyrimidine metabolism; UMP biosynthesis via de novo pathway; (S)-dihydroorotate from bicarbonate: step 2/3. Catalyzes the condensation of carbamoyl phosphate and aspartate to form carbamoyl aspartate and inorganic phosphate, the committed step in the de novo pyrimidine nucleotide biosynthesis pathway. The chain is Aspartate carbamoyltransferase catalytic subunit from Staphylococcus saprophyticus subsp. saprophyticus (strain ATCC 15305 / DSM 20229 / NCIMB 8711 / NCTC 7292 / S-41).